The following is a 1276-amino-acid chain: Probable ubiquitin carboxyl-terminal hydrolase K02C4.3 (1276 aa).

Positions 168 to 762 (TGLYNSGNTC…SAYMLMYVRS (595 aa)) constitute a USP domain. Cys177 (nucleophile) is an active-site residue. The interval 375-402 (SMDTEAATSSNLPGNSVENHPNPAAPEV) is disordered. Positions 380-393 (AATSSNLPGNSVEN) are enriched in polar residues. His707 serves as the catalytic Proton acceptor.

It belongs to the peptidase C19 family.

It carries out the reaction Thiol-dependent hydrolysis of ester, thioester, amide, peptide and isopeptide bonds formed by the C-terminal Gly of ubiquitin (a 76-residue protein attached to proteins as an intracellular targeting signal).. This is Probable ubiquitin carboxyl-terminal hydrolase K02C4.3 from Caenorhabditis elegans.